The sequence spans 450 residues: MGLRSHHLSLGLLLLFLLPAECLGAEGRLALKLFRDLFANYTSALRPVADTDQTLNVTLEVTLSQIIDMDERNQVLTLYLWIRQEWTDAYLRWDPNAYGGLDAIRIPSSLVWRPDIVLYNKADAQPPGSASTNVVLRHDGAVRWDAPAITRSSCRVDVAAFPFDAQHCGLTFGSWTHGGHQLDVRPRGAAASLADFVENVEWRVLGMPARRRVLTYGCCSEPYPDVTFTLLLRRRAAAYVCNLLLPCVLISLLAPLAFHLPADSGEKVSLGVTVLLALTVFQLLLAESMPPAESVPLIGKYYMATMTMVTFSTALTILIMNLHYCGPSVRPVPAWARALLLGHLARGLCVRERGEPCGQSRPPELSPSPQSPEGGAGPPAGPCHEPRCLCRQEALLHHVATIANTFRSHRAAQRCHEDWKRLARVMDRFFLAIFFSMALVMSLLVLVQAL.

An N-terminal signal peptide occupies residues 1–24; sequence MGLRSHHLSLGLLLLFLLPAECLG. Topologically, residues 25–237 are extracellular; it reads AEGRLALKLF…FTLLLRRRAA (213 aa). N-linked (GlcNAc...) asparagine glycosylation is found at asparagine 40 and asparagine 56. Intrachain disulfides connect cysteine 154–cysteine 168 and cysteine 218–cysteine 219. The next 3 membrane-spanning stretches (helical) occupy residues 238-258, 268-288, and 302-322; these read AYVCNLLLPCVLISLLAPLAF, VSLGVTVLLALTVFQLLLAES, and YMATMTMVTFSTALTILIMNL. At 323–428 the chain is on the cytoplasmic side; the sequence is HYCGPSVRPV…WKRLARVMDR (106 aa). The segment at 355 to 380 is disordered; it reads EPCGQSRPPELSPSPQSPEGGAGPPA. The helical transmembrane segment at 429–449 threads the bilayer; that stretch reads FFLAIFFSMALVMSLLVLVQA.

This sequence belongs to the ligand-gated ion channel (TC 1.A.9) family. Acetylcholine receptor (TC 1.A.9.1) subfamily. Alpha-10/CHRNA10 sub-subfamily. In terms of assembly, forms homo- or heterooligomeric channels in conjunction with CHRNA10. The native outer hair cell receptor may be composed of CHRNA9:CHRNA10 heterooligomers. Found in the stoichiometric form (CHRNA9)2:(CHRNA10)3. As to expression, expressed in inner-ear tissue, tonsil, immortalized B-cells, cultured T-cells and peripheral blood lymphocytes.

It is found in the synaptic cell membrane. It localises to the cell membrane. The enzyme catalyses Ca(2+)(in) = Ca(2+)(out). It carries out the reaction K(+)(in) = K(+)(out). The catalysed reaction is Na(+)(in) = Na(+)(out). It catalyses the reaction Mg(2+)(in) = Mg(2+)(out). Its activity is regulated as follows. Activated by a myriad of ligands such as acetylcholine. AChR activity is inhibited by the antagonists alpha-conotoxins RgIA and GeXXA, small disulfide-constrained peptides from cone snails. In terms of biological role, component of neuronal acetylcholine receptors (nAChRs) that function as pentameric, ligand-gated cation channels with high calcium permeability. nAChRs are excitatory neurotrasnmitter receptors formed by a collection of nAChR subunits. Each nAchR subunit confers differential attributes to channel properties, including activation, deactivation and desensitization kinetics, pH sensitivity, cation permeability, and binding to allosteric modulators. Forms heteropentamers with CHRNA9. Expressed in the inner ear, in sympathetic neurons and in other non-neuronal cells, such as skin keratinocytes and lymphocytes. nAChR formed by CHRNA9:CHRNA10 is involved in modulation of auditory stimuli. The channel is permeable to a range of divalent cations including calcium, the influx of which may activate a potassium current which hyperpolarizes the cell membrane. In the ear, mediates synaptic transmission between efferent olivocochlear fibers and hair cells of the cochlea, this may lead to a reduction in basilar membrane motion, altering the activity of auditory nerve fibers and reducing the range of dynamic hearing. This may protect against acoustic trauma. May also regulate keratinocyte adhesion. This chain is Neuronal acetylcholine receptor subunit alpha-10, found in Homo sapiens (Human).